Reading from the N-terminus, the 440-residue chain is Ribosomal protein uS12 methylthiotransferase RimO (440 aa).

Residues 6–116 (PKVGFVSLGC…VVTAVHEVVP (111 aa)) enclose the MTTase N-terminal domain. The [4Fe-4S] cluster site is built by C15, C51, C80, C149, C153, and C156. The region spanning 135 to 373 (LTPRHYAYLK…MAHQQAISAA (239 aa)) is the Radical SAM core domain. Residues 376–440 (QLKVGKEIEV…DEYDLWAEPV (65 aa)) form the TRAM domain.

Belongs to the methylthiotransferase family. RimO subfamily. It depends on [4Fe-4S] cluster as a cofactor.

Its subcellular location is the cytoplasm. The catalysed reaction is L-aspartate(89)-[ribosomal protein uS12]-hydrogen + (sulfur carrier)-SH + AH2 + 2 S-adenosyl-L-methionine = 3-methylsulfanyl-L-aspartate(89)-[ribosomal protein uS12]-hydrogen + (sulfur carrier)-H + 5'-deoxyadenosine + L-methionine + A + S-adenosyl-L-homocysteine + 2 H(+). Catalyzes the methylthiolation of an aspartic acid residue of ribosomal protein uS12. This Pseudomonas paraeruginosa (strain DSM 24068 / PA7) (Pseudomonas aeruginosa (strain PA7)) protein is Ribosomal protein uS12 methylthiotransferase RimO.